A 144-amino-acid polypeptide reads, in one-letter code: Small ribosomal subunit protein uS12 (144 aa).

The interval 1–55 (MPTINQLVRKGREDKVVKSKSPALQKGYNSFKKSQTNQSSPQKRGVCTRVGTMTP) is disordered. Over residues 27–42 (GYNSFKKSQTNQSSPQ) the composition is skewed to polar residues. Asp102 carries the 3-methylthioaspartic acid modification. Positions 119–144 (GVNNRKQGRSKYGTKRPKPGQAAAKK) are disordered. Residues 124-144 (KQGRSKYGTKRPKPGQAAAKK) show a composition bias toward basic residues.

Belongs to the universal ribosomal protein uS12 family. Part of the 30S ribosomal subunit. Contacts proteins S8 and S17. May interact with IF1 in the 30S initiation complex.

In terms of biological role, with S4 and S5 plays an important role in translational accuracy. Its function is as follows. Interacts with and stabilizes bases of the 16S rRNA that are involved in tRNA selection in the A site and with the mRNA backbone. Located at the interface of the 30S and 50S subunits, it traverses the body of the 30S subunit contacting proteins on the other side and probably holding the rRNA structure together. The combined cluster of proteins S8, S12 and S17 appears to hold together the shoulder and platform of the 30S subunit. In Brevibacillus brevis (strain 47 / JCM 6285 / NBRC 100599), this protein is Small ribosomal subunit protein uS12.